A 282-amino-acid polypeptide reads, in one-letter code: Acetyl-coenzyme A carboxylase carboxyl transferase subunit beta (282 aa).

The region spanning 29–282 (LMQRCPNCGL…LLKYGGMQDD (254 aa)) is the CoA carboxyltransferase N-terminal domain. Cys33, Cys36, Cys51, and Cys54 together coordinate Zn(2+). The C4-type zinc-finger motif lies at 33–54 (CPNCGLEFFARRLDKYKTCPDC).

Belongs to the AccD/PCCB family. As to quaternary structure, acetyl-CoA carboxylase is a heterohexamer composed of biotin carboxyl carrier protein (AccB), biotin carboxylase (AccC) and two subunits each of ACCase subunit alpha (AccA) and ACCase subunit beta (AccD). Zn(2+) serves as cofactor.

The protein localises to the cytoplasm. The enzyme catalyses N(6)-carboxybiotinyl-L-lysyl-[protein] + acetyl-CoA = N(6)-biotinyl-L-lysyl-[protein] + malonyl-CoA. It functions in the pathway lipid metabolism; malonyl-CoA biosynthesis; malonyl-CoA from acetyl-CoA: step 1/1. Component of the acetyl coenzyme A carboxylase (ACC) complex. Biotin carboxylase (BC) catalyzes the carboxylation of biotin on its carrier protein (BCCP) and then the CO(2) group is transferred by the transcarboxylase to acetyl-CoA to form malonyl-CoA. This is Acetyl-coenzyme A carboxylase carboxyl transferase subunit beta from Lactobacillus delbrueckii subsp. bulgaricus (strain ATCC BAA-365 / Lb-18).